The primary structure comprises 186 residues: Threonylcarbamoyl-AMP synthase (186 aa).

The YrdC-like domain occupies 2-186; it reads VSNLQQVVKA…ARTEQLLRQG (185 aa).

Belongs to the SUA5 family. TsaC subfamily.

Its subcellular location is the cytoplasm. It catalyses the reaction L-threonine + hydrogencarbonate + ATP = L-threonylcarbamoyladenylate + diphosphate + H2O. In terms of biological role, required for the formation of a threonylcarbamoyl group on adenosine at position 37 (t(6)A37) in tRNAs that read codons beginning with adenine. Catalyzes the conversion of L-threonine, HCO(3)(-)/CO(2) and ATP to give threonylcarbamoyl-AMP (TC-AMP) as the acyladenylate intermediate, with the release of diphosphate. This Vibrio vulnificus (strain CMCP6) protein is Threonylcarbamoyl-AMP synthase.